A 292-amino-acid polypeptide reads, in one-letter code: tRNA dimethylallyltransferase (292 aa).

Ala5–Thr12 is an ATP binding site. Position 7 to 12 (Thr7 to Thr12) interacts with substrate. The tract at residues Asp29 to Gln32 is interaction with substrate tRNA.

The protein belongs to the IPP transferase family. Monomer. It depends on Mg(2+) as a cofactor.

The catalysed reaction is adenosine(37) in tRNA + dimethylallyl diphosphate = N(6)-dimethylallyladenosine(37) in tRNA + diphosphate. In terms of biological role, catalyzes the transfer of a dimethylallyl group onto the adenine at position 37 in tRNAs that read codons beginning with uridine, leading to the formation of N6-(dimethylallyl)adenosine (i(6)A). This Leptospira borgpetersenii serovar Hardjo-bovis (strain JB197) protein is tRNA dimethylallyltransferase.